Here is a 430-residue protein sequence, read N- to C-terminus: 3-phosphoshikimate 1-carboxyvinyltransferase (430 aa).

3-phosphoshikimate contacts are provided by lysine 23, serine 24, and arginine 28. Phosphoenolpyruvate is bound at residue lysine 23. The phosphoenolpyruvate site is built by glycine 95 and arginine 123. Residues serine 169, glutamine 171, aspartate 315, and lysine 342 each contribute to the 3-phosphoshikimate site. Residue glutamine 171 coordinates phosphoenolpyruvate. Residue aspartate 315 is the Proton acceptor of the active site. Phosphoenolpyruvate-binding residues include arginine 346 and arginine 388.

It belongs to the EPSP synthase family. As to quaternary structure, monomer.

It is found in the cytoplasm. The enzyme catalyses 3-phosphoshikimate + phosphoenolpyruvate = 5-O-(1-carboxyvinyl)-3-phosphoshikimate + phosphate. Its pathway is metabolic intermediate biosynthesis; chorismate biosynthesis; chorismate from D-erythrose 4-phosphate and phosphoenolpyruvate: step 6/7. In terms of biological role, catalyzes the transfer of the enolpyruvyl moiety of phosphoenolpyruvate (PEP) to the 5-hydroxyl of shikimate-3-phosphate (S3P) to produce enolpyruvyl shikimate-3-phosphate and inorganic phosphate. The protein is 3-phosphoshikimate 1-carboxyvinyltransferase of Streptococcus pyogenes serotype M6 (strain ATCC BAA-946 / MGAS10394).